The chain runs to 366 residues: DNA double-strand break repair protein Mre11 (366 aa).

4 residues coordinate Mn(2+): Asp-8, His-10, Asp-49, and Asn-84. The Proton donor role is filled by His-85. Positions 158, 186, and 188 each coordinate Mn(2+).

This sequence belongs to the MRE11/RAD32 family. In terms of assembly, homodimer. Forms a heterotetramer composed of two Mre11 subunits and two Rad50 subunits. It depends on Mn(2+) as a cofactor.

With respect to regulation, nuclease activity is regulated by Rad50. Part of the Rad50/Mre11 complex, which is involved in the early steps of DNA double-strand break (DSB) repair. The complex may facilitate opening of the processed DNA ends to aid in the recruitment of HerA and NurA. Mre11 binds to DSB ends and has both double-stranded 3'-5' exonuclease activity and single-stranded endonuclease activity. The sequence is that of DNA double-strand break repair protein Mre11 from Methanocaldococcus jannaschii (strain ATCC 43067 / DSM 2661 / JAL-1 / JCM 10045 / NBRC 100440) (Methanococcus jannaschii).